A 478-amino-acid polypeptide reads, in one-letter code: Probable cytosolic Fe-S cluster assembly factor CPIJ010948 (478 aa).

The [4Fe-4S] cluster site is built by C23, C69, C72, C75, C189, C245, C396, and C400.

The protein belongs to the NARF family.

Functionally, component of the cytosolic iron-sulfur (Fe/S) protein assembly machinery. Required for maturation of extramitochondrial Fe/S proteins. In Culex quinquefasciatus (Southern house mosquito), this protein is Probable cytosolic Fe-S cluster assembly factor CPIJ010948.